Here is a 243-residue protein sequence, read N- to C-terminus: Octanoyltransferase (243 aa).

The 179-residue stretch at 49-227 folds into the BPL/LPL catalytic domain; that stretch reads PLAPQAVWLL…SLSDRFGLVW (179 aa). Residues 91 to 98, 158 to 160, and 171 to 173 each bind substrate; these read RGGEVTHH, AIG, and GLA. Cys-189 acts as the Acyl-thioester intermediate in catalysis.

Belongs to the LipB family.

The protein localises to the cytoplasm. The enzyme catalyses octanoyl-[ACP] + L-lysyl-[protein] = N(6)-octanoyl-L-lysyl-[protein] + holo-[ACP] + H(+). It functions in the pathway protein modification; protein lipoylation via endogenous pathway; protein N(6)-(lipoyl)lysine from octanoyl-[acyl-carrier-protein]: step 1/2. Functionally, catalyzes the transfer of endogenously produced octanoic acid from octanoyl-acyl-carrier-protein onto the lipoyl domains of lipoate-dependent enzymes. Lipoyl-ACP can also act as a substrate although octanoyl-ACP is likely to be the physiological substrate. The chain is Octanoyltransferase from Prochlorococcus marinus (strain MIT 9313).